The primary structure comprises 397 residues: Chorismate synthase (397 aa).

The NADP(+) site is built by Arg40 and Arg46. FMN is bound by residues 129 to 131, 257 to 258, Gly302, 317 to 321, and Arg343; these read RSS, QA, and KPISS.

It belongs to the chorismate synthase family. Homotetramer. The cofactor is FMNH2.

The catalysed reaction is 5-O-(1-carboxyvinyl)-3-phosphoshikimate = chorismate + phosphate. The protein operates within metabolic intermediate biosynthesis; chorismate biosynthesis; chorismate from D-erythrose 4-phosphate and phosphoenolpyruvate: step 7/7. In terms of biological role, catalyzes the anti-1,4-elimination of the C-3 phosphate and the C-6 proR hydrogen from 5-enolpyruvylshikimate-3-phosphate (EPSP) to yield chorismate, which is the branch point compound that serves as the starting substrate for the three terminal pathways of aromatic amino acid biosynthesis. This reaction introduces a second double bond into the aromatic ring system. This chain is Chorismate synthase, found in Chlorobaculum tepidum (strain ATCC 49652 / DSM 12025 / NBRC 103806 / TLS) (Chlorobium tepidum).